The chain runs to 135 residues: Large ribosomal subunit protein uL16c (135 aa).

Belongs to the universal ribosomal protein uL16 family. In terms of assembly, part of the 50S ribosomal subunit.

The protein resides in the plastid. The protein localises to the chloroplast. The sequence is that of Large ribosomal subunit protein uL16c from Nymphaea alba (White water-lily).